A 630-amino-acid chain; its full sequence is Transferrin-binding protein B (630 aa).

The first 17 residues, Met-1 to Ala-17, serve as a signal peptide directing secretion. The N-palmitoyl cysteine moiety is linked to residue Cys-18. The S-diacylglycerol cysteine moiety is linked to residue Cys-18. Disordered stretches follow at residues Asp-26–Leu-53, Val-280–Gly-301, and Asn-591–Ala-613. Polar residues predominate over residues Asn-32–Lys-50.

It belongs to the TbpB family.

It is found in the cell outer membrane. It localises to the cell surface. In terms of biological role, haemophilus acquires iron by extracting it from serum transferrin (TF) in its human host. Acts as a transferrin receptor and is required for transferrin utilization. The polypeptide is Transferrin-binding protein B (Haemophilus influenzae (strain 86-028NP)).